Reading from the N-terminus, the 95-residue chain is Protein Vpr (95 aa).

The tract at residues 1-42 is homooligomerization; the sequence is MEQAPEDQGPQREPYNEWALELLEDLKNEALRHFPRPWLHGL. Phosphoserine; by host occurs at positions 79, 93, and 95.

The protein belongs to the HIV-1 VPR protein family. Homooligomer, may form homodimer. Interacts with p6-gag region of the Pr55 Gag precursor protein through a (Leu-X-X)4 motif near the C-terminus of the P6gag protein. Interacts with host UNG. May interact with host RAD23A/HHR23A. Interacts with host VPRBP/DCAF1, leading to hijack the CUL4A-RBX1-DDB1-DCAF1/VPRBP complex, mediating ubiquitination of host proteins such as TERT and ZGPAT and arrest of the cell cycle in G2 phase. In terms of processing, phosphorylated on several residues by host. These phosphorylations regulate VPR activity for the nuclear import of the HIV-1 pre-integration complex.

It localises to the virion. It is found in the host nucleus. The protein localises to the host extracellular space. During virus replication, may deplete host UNG protein, and incude G2-M cell cycle arrest. Acts by targeting specific host proteins for degradation by the 26S proteasome, through association with the cellular CUL4A-DDB1 E3 ligase complex by direct interaction with host VPRPB/DCAF-1. Cell cycle arrest reportedly occurs within hours of infection and is not blocked by antiviral agents, suggesting that it is initiated by the VPR carried into the virion. Additionally, VPR induces apoptosis in a cell cycle dependent manner suggesting that these two effects are mechanistically linked. Detected in the serum and cerebrospinal fluid of AIDS patient, VPR may also induce cell death to bystander cells. Its function is as follows. During virus entry, plays a role in the transport of the viral pre-integration (PIC) complex to the host nucleus. This function is crucial for viral infection of non-dividing macrophages. May act directly at the nuclear pore complex, by binding nucleoporins phenylalanine-glycine (FG)-repeat regions. The polypeptide is Protein Vpr (Pan troglodytes (Chimpanzee)).